We begin with the raw amino-acid sequence, 287 residues long: Probable 18S rRNA (guanine-N(7))-methyltransferase (287 aa).

Residues 214 to 287 (GVEGEEYEQQ…FSGRKRGPKF (74 aa)) form a disordered region. The span at 217–228 (GEEYEQQEEEDS) shows a compositional bias: acidic residues. Positions 234–245 (SNRKRDRRRVTK) are enriched in basic residues. Residues 253–278 (KTKEWIMNKKDRQRKQGREIKNDSKF) are compositionally biased toward basic and acidic residues.

The protein belongs to the class I-like SAM-binding methyltransferase superfamily. BUD23/WBSCR22 family.

Its subcellular location is the nucleus. The protein resides in the nucleoplasm. The protein localises to the cytoplasm. It localises to the perinuclear region. It carries out the reaction a guanosine in 18S rRNA + S-adenosyl-L-methionine = an N(7)-methylguanosine in 18S rRNA + S-adenosyl-L-homocysteine. In terms of biological role, S-adenosyl-L-methionine-dependent methyltransferase that specifically methylates the N(7) position of a guanine in 18S rRNA. Important for biogenesis end export of the 40S ribosomal subunit independent on its methyltransferase activity. Functionally, S-adenosyl-L-methionine-dependent methyltransferase that specifically methylates the N(7) position of a guanine in 18S rRNA. Requires the methyltransferase adapter protein TRM112 for full rRNA methyltransferase activity. Involved in the pre-rRNA processing steps leading to small-subunit rRNA production independently of its RNA-modifying catalytic activity. Important for biogenesis end export of the 40S ribosomal subunit independent on its methyltransferase activity. This chain is Probable 18S rRNA (guanine-N(7))-methyltransferase, found in Dictyostelium discoideum (Social amoeba).